The primary structure comprises 111 residues: Large ribosomal subunit protein uL22 (111 aa).

Belongs to the universal ribosomal protein uL22 family. Part of the 50S ribosomal subunit.

This protein binds specifically to 23S rRNA; its binding is stimulated by other ribosomal proteins, e.g. L4, L17, and L20. It is important during the early stages of 50S assembly. It makes multiple contacts with different domains of the 23S rRNA in the assembled 50S subunit and ribosome. Its function is as follows. The globular domain of the protein is located near the polypeptide exit tunnel on the outside of the subunit, while an extended beta-hairpin is found that lines the wall of the exit tunnel in the center of the 70S ribosome. The sequence is that of Large ribosomal subunit protein uL22 from Mycoplasma capricolum subsp. capricolum (strain California kid / ATCC 27343 / NCTC 10154).